A 166-amino-acid polypeptide reads, in one-letter code: Myosin regulatory light chain 2, ventricular/cardiac muscle isoform (166 aa).

Serine 2 carries the post-translational modification N,N,N-trimethylserine. Position 14 is a deamidated asparagine (asparagine 14). Phosphoserine is present on serine 19. 3 consecutive EF-hand domains span residues 24-59 (TQIQ…LGRV), 94-129 (DPEE…QAER), and 130-165 (FSKE…GEEK). Positions 37, 39, 41, and 48 each coordinate Ca(2+). Threonine 52 bears the Phosphothreonine mark.

In terms of assembly, myosin is a hexamer of 2 heavy chains and 4 light chains. Interacts with MYOC. N-terminus is methylated by METTL11A/NTM1. Post-translationally, phosphorylated by MYLK3 and MYLK2; promotes cardiac muscle contraction and function. Dephosphorylated by PPP1CB complexed to PPP1R12B. The phosphorylated form in adult is expressed as gradients across the heart from endocardium (low phosphorylation) to epicardium (high phosphorylation); regulates cardiac torsion and workload distribution.

The protein localises to the cytoplasm. The protein resides in the myofibril. It localises to the sarcomere. It is found in the a band. Contractile protein that plays a role in heart development and function. Following phosphorylation, plays a role in cross-bridge cycling kinetics and cardiac muscle contraction by increasing myosin lever arm stiffness and promoting myosin head diffusion; as a consequence of the increase in maximum contraction force and calcium sensitivity of contraction force. These events altogether slow down myosin kinetics and prolong duty cycle resulting in accumulated myosins being cooperatively recruited to actin binding sites to sustain thin filament activation as a means to fine-tune myofilament calcium sensitivity to force. During cardiogenesis plays an early role in cardiac contractility by promoting cardiac myofibril assembly. The polypeptide is Myosin regulatory light chain 2, ventricular/cardiac muscle isoform (Bos taurus (Bovine)).